Consider the following 328-residue polypeptide: Interleukin-12 subunit beta (328 aa).

The signal sequence occupies residues methionine 1–alanine 22. One can recognise an Ig-like C2-type domain in the interval isoleucine 23–lysine 106. 3 disulfides stabilise this stretch: cysteine 50-cysteine 90, cysteine 131-cysteine 142, and cysteine 170-cysteine 193. Asparagine 135 is a glycosylation site (N-linked (GlcNAc...) asparagine). Asparagine 222 is a glycosylation site (N-linked (GlcNAc...) asparagine). The Fibronectin type-III domain maps to proline 237 to serine 328. Cysteine 300 and cysteine 327 are joined by a disulfide. A C-linked (Man) tryptophan glycan is attached at tryptophan 319.

The protein belongs to the IL-12B family. In terms of assembly, heterodimer with IL12A; disulfide-linked. The heterodimer is known as interleukin IL-12. Heterodimer with IL23A; disulfide-linked. The heterodimer is known as interleukin IL-23. Also secreted as a monomer. Interacts with NBR1; this interaction promotes IL-12 secretion. Post-translationally, known to be C-mannosylated in the recombinant protein; it is not yet known for sure if the wild-type protein is also modified.

It localises to the secreted. In terms of biological role, cytokine that can act as a growth factor for activated T and NK cells, enhance the lytic activity of NK/lymphokine-activated killer cells, and stimulate the production of IFN-gamma by resting PBMC. Functionally, associates with IL23A to form the IL-23 interleukin, a heterodimeric cytokine which functions in innate and adaptive immunity. IL-23 may constitute with IL-17 an acute response to infection in peripheral tissues. IL-23 binds to a heterodimeric receptor complex composed of IL12RB1 and IL23R, activates the Jak-Stat signaling cascade, stimulates memory rather than naive T-cells and promotes production of pro-inflammatory cytokines. IL-23 induces autoimmune inflammation and thus may be responsible for autoimmune inflammatory diseases and may be important for tumorigenesis. The protein is Interleukin-12 subunit beta (IL12B) of Homo sapiens (Human).